Here is a 20-residue protein sequence, read N- to C-terminus: Pregnancy-associated glycoprotein 73B (20 aa).

This sequence belongs to the peptidase A1 family. Post-translationally, N-glycosylated. Expressed in chorionic epithelium (trophectoderm).

The protein localises to the secreted. Its subcellular location is the extracellular space. In Bubalus bubalis (Domestic water buffalo), this protein is Pregnancy-associated glycoprotein 73B.